The primary structure comprises 419 residues: Gamma-glutamyl phosphate reductase (419 aa).

It belongs to the gamma-glutamyl phosphate reductase family.

It localises to the cytoplasm. It carries out the reaction L-glutamate 5-semialdehyde + phosphate + NADP(+) = L-glutamyl 5-phosphate + NADPH + H(+). The protein operates within amino-acid biosynthesis; L-proline biosynthesis; L-glutamate 5-semialdehyde from L-glutamate: step 2/2. In terms of biological role, catalyzes the NADPH-dependent reduction of L-glutamate 5-phosphate into L-glutamate 5-semialdehyde and phosphate. The product spontaneously undergoes cyclization to form 1-pyrroline-5-carboxylate. The chain is Gamma-glutamyl phosphate reductase from Yersinia pestis.